A 464-amino-acid polypeptide reads, in one-letter code: MTDKQQNKLWGGRFSESTDQFVQEFTASVNFDRRMYRQDIYGSQAHATMLAEVGVLTDEERDAIIVGLREIQLEIENGEFQWSVALEDVHMNIEARLTDKIGITGKKLHTGRSRNDQVATDIRLWLRDELLILEEQFLHLMQGLLNLAEREAATIMPGFTHLQTAQPVTFGHHLLAWFEMLKRDRERLLDCKKRVNRMPLGAAALAGTTYPINRERTCELLGFDGVCENSLDAVSDRDFAIEFCAMAALTMTHLSRISEELVLWTSAQFNFINLPDRFCTGSSIMPQKKNPDVPELVRGKTGRVNGHLISLLTLMKSQPLAYNKDNQEDKEPLYDAVDTLKGSLRAFGDMIPALEPNREVMREAARRGFATATDLADYLVRKGIAFRDSHEIVGKAVAYGVEKKKDLGDMSLSELKQFSDQIEDNVFEVLTLEGSVSARNHIGGTAPDQVRAAVARAREALDNT.

It belongs to the lyase 1 family. Argininosuccinate lyase subfamily.

It is found in the cytoplasm. It catalyses the reaction 2-(N(omega)-L-arginino)succinate = fumarate + L-arginine. The protein operates within amino-acid biosynthesis; L-arginine biosynthesis; L-arginine from L-ornithine and carbamoyl phosphate: step 3/3. This Alcanivorax borkumensis (strain ATCC 700651 / DSM 11573 / NCIMB 13689 / SK2) protein is Argininosuccinate lyase.